A 500-amino-acid polypeptide reads, in one-letter code: Protein C13 (500 aa).

Positions 27–89 (EEIVFIMTVG…IETGIVTIDL (63 aa)) constitute a BTB domain. Kelch repeat units follow at residues 301-348 (ILYL…IFKN), 349-395 (RIYV…GTDN), 397-440 (LYVV…YHHG), and 441-490 (YIYM…IIED).

It belongs to the poxviruses Kelch family.

The protein is Protein C13 of Swinepox virus (strain Kasza) (SWPV).